Here is a 105-residue protein sequence, read N- to C-terminus: uncharacterized protein (105 aa).

Residues 64–84 (ILLISIFFLLLFALPQHTMGI) form a helical membrane-spanning segment.

The protein resides in the membrane. This is an uncharacterized protein from Saccharomyces cerevisiae (strain ATCC 204508 / S288c) (Baker's yeast).